A 641-amino-acid polypeptide reads, in one-letter code: Calpain-6 (641 aa).

Residues 26–343 (LFCDPTFLPE…FHKLNVCRNV (318 aa)) form the Calpain catalytic domain. The tract at residues 344 to 495 (NNPIFGRKEL…IFSEVPVQLR (152 aa)) is domain III. The C2 domain maps to 498-621 (TLDMPKMSCW…YLRKKGGPTA (124 aa)).

It belongs to the peptidase C2 family. In terms of assembly, interacts (via domain III) with microtubules. Interacts (via domain II) with ARHGEF2 (via the N-terminal zinc finger). In terms of tissue distribution, expressed only in placenta.

The protein localises to the cytoplasm. It localises to the perinuclear region. The protein resides in the cytoskeleton. It is found in the spindle. Microtubule-stabilizing protein that may be involved in the regulation of microtubule dynamics and cytoskeletal organization. May act as a regulator of RAC1 activity through interaction with ARHGEF2 to control lamellipodial formation and cell mobility. Does not seem to have protease activity as it has lost the active site residues. The polypeptide is Calpain-6 (CAPN6) (Homo sapiens (Human)).